We begin with the raw amino-acid sequence, 225 residues long: Urease accessory protein UreG (225 aa).

GTP is bound at residue 25-32; the sequence is GPVGAGKT.

The protein belongs to the SIMIBI class G3E GTPase family. UreG subfamily. In terms of assembly, homodimer. UreD, UreF and UreG form a complex that acts as a GTP-hydrolysis-dependent molecular chaperone, activating the urease apoprotein by helping to assemble the nickel containing metallocenter of UreC. The UreE protein probably delivers the nickel.

The protein localises to the cytoplasm. Functionally, facilitates the functional incorporation of the urease nickel metallocenter. This process requires GTP hydrolysis, probably effectuated by UreG. This Haemophilus influenzae (strain 86-028NP) protein is Urease accessory protein UreG.